Reading from the N-terminus, the 407-residue chain is MEIILGVVMFTLIVLALTVMILFAKSKLVNTGDITIDINEDADKSFTAPAGDKLLNMLSSHGIFVSSACGGGGSCGQCRVTIKEGGGDILPTELSHISKREAKEGCRLACQVSVKQNLKIELPEEIFGVKKWECEVISNDNKATFIKELKLKIPDGEVVPFRAGGFIQIEAEPHTVKYADFDVPEEYRGDWDKFNLFRFESVVAEPTVRAYSMANYPEEHGIIMLNVRIATPPPSVPDAPPGIMSSYIWSLKPGDKVVISGPFGEFFAKDTDAEMVFIGGGAGMAPMRSHIFDQLKRLHSKRRISFWYGARSRREMFYEEDFDQLQAENDNFRWHVALSDPQPEDNWTGYTGFIHNVLLENYLKNHPAPEDCEFYMCGPPMMNAAVIKMLKDLGVEDENIMLDDFGG.

Residues 3-23 (IILGVVMFTLIVLALTVMILF) traverse the membrane as a helical segment. The 2Fe-2S ferredoxin-type domain maps to 32 to 126 (GDITIDINED…NLKIELPEEI (95 aa)). [2Fe-2S] cluster is bound by residues C69, C75, C78, and C110. The FAD-binding FR-type domain occupies 129 to 269 (VKKWECEVIS…SGPFGEFFAK (141 aa)).

Belongs to the NqrF family. In terms of assembly, composed of six subunits; NqrA, NqrB, NqrC, NqrD, NqrE and NqrF. [2Fe-2S] cluster is required as a cofactor. It depends on FAD as a cofactor.

The protein resides in the cell inner membrane. The catalysed reaction is a ubiquinone + n Na(+)(in) + NADH + H(+) = a ubiquinol + n Na(+)(out) + NAD(+). Its function is as follows. NQR complex catalyzes the reduction of ubiquinone-1 to ubiquinol by two successive reactions, coupled with the transport of Na(+) ions from the cytoplasm to the periplasm. The first step is catalyzed by NqrF, which accepts electrons from NADH and reduces ubiquinone-1 to ubisemiquinone by a one-electron transfer pathway. The sequence is that of Na(+)-translocating NADH-quinone reductase subunit F from Yersinia enterocolitica serotype O:8 / biotype 1B (strain NCTC 13174 / 8081).